Here is a 958-residue protein sequence, read N- to C-terminus: N-terminal acetyltransferase B complex subunit NAA25 homolog (958 aa).

3 TPR repeats span residues 7-42, 78-111, and 320-353; these read AVLE…HPNT, ELTL…DPSE, and FFAY…MLEY.

The protein belongs to the MDM20/NAA25 family. As to quaternary structure, component of the N-terminal acetyltransferase B (NatB) complex. Interacts with acer-1. In terms of tissue distribution, expressed in germline and somatic cells.

The protein resides in the cytoplasm. The protein localises to the nucleus. It localises to the chromosome. Functionally, non-catalytic subunit of the NatB complex which catalyzes acetylation of the N-terminal methionine residues of proteins beginning with Met-Asp or Met-Glu. Required for chromosome organization and arrangement; specifically for assembly of the central region components of the synaptonemal complex onto chromosomes during meiosis and for DNA double stranded break formation and repair. Acts downstream of xnd-1 to regulate levels of histone acetylation in germ and somatic cell nuclei by controlling acetyl-CoA production through antagonizing the acetyl-CoA hydrolase activity of acer-1. This chain is N-terminal acetyltransferase B complex subunit NAA25 homolog, found in Caenorhabditis elegans.